A 338-amino-acid chain; its full sequence is Ferrochelatase (338 aa).

Fe cation contacts are provided by H202 and E283.

This sequence belongs to the ferrochelatase family.

The protein resides in the cytoplasm. The catalysed reaction is heme b + 2 H(+) = protoporphyrin IX + Fe(2+). It participates in porphyrin-containing compound metabolism; protoheme biosynthesis; protoheme from protoporphyrin-IX: step 1/1. In terms of biological role, catalyzes the ferrous insertion into protoporphyrin IX. The chain is Ferrochelatase from Acinetobacter baumannii (strain ATCC 17978 / DSM 105126 / CIP 53.77 / LMG 1025 / NCDC KC755 / 5377).